Here is a 252-residue protein sequence, read N- to C-terminus: Triosephosphate isomerase (252 aa).

Asparagine 10–lysine 12 is a substrate binding site. The active-site Electrophile is histidine 96. Glutamate 168 (proton acceptor) is an active-site residue. Substrate-binding positions include glycine 174, serine 213, and glycine 234–glycine 235.

Belongs to the triosephosphate isomerase family. Homodimer.

The protein resides in the cytoplasm. The catalysed reaction is D-glyceraldehyde 3-phosphate = dihydroxyacetone phosphate. The protein operates within carbohydrate biosynthesis; gluconeogenesis. Its pathway is carbohydrate degradation; glycolysis; D-glyceraldehyde 3-phosphate from glycerone phosphate: step 1/1. Its function is as follows. Involved in the gluconeogenesis. Catalyzes stereospecifically the conversion of dihydroxyacetone phosphate (DHAP) to D-glyceraldehyde-3-phosphate (G3P). This Nitrosomonas europaea (strain ATCC 19718 / CIP 103999 / KCTC 2705 / NBRC 14298) protein is Triosephosphate isomerase.